A 159-amino-acid polypeptide reads, in one-letter code: Cyclic pyranopterin monophosphate synthase (159 aa).

Residues 75-77 and 113-114 contribute to the substrate site; these read LCH and ME. Residue Asp128 is part of the active site.

It belongs to the MoaC family. In terms of assembly, homohexamer; trimer of dimers.

It carries out the reaction (8S)-3',8-cyclo-7,8-dihydroguanosine 5'-triphosphate = cyclic pyranopterin phosphate + diphosphate. It functions in the pathway cofactor biosynthesis; molybdopterin biosynthesis. Catalyzes the conversion of (8S)-3',8-cyclo-7,8-dihydroguanosine 5'-triphosphate to cyclic pyranopterin monophosphate (cPMP). The chain is Cyclic pyranopterin monophosphate synthase from Aliivibrio salmonicida (strain LFI1238) (Vibrio salmonicida (strain LFI1238)).